The primary structure comprises 162 residues: MSAKINSKKLEMFDLLKKFIDNKQNLFFLDYRGLSVSQLTDLRNKIEGEHGALKVVKNNIMKMVLKEKNINIVDSCLVGPTVVVTALEEANVIAKIFYDFVKSSTLKVKGGFVLGEFYDEAKVQAYSKLPTKKESISLLASVLKAPVSKLARTLKALADIKN.

It belongs to the universal ribosomal protein uL10 family. As to quaternary structure, part of the ribosomal stalk of the 50S ribosomal subunit. The N-terminus interacts with L11 and the large rRNA to form the base of the stalk. The C-terminus forms an elongated spine to which L12 dimers bind in a sequential fashion forming a multimeric L10(L12)X complex.

In terms of biological role, forms part of the ribosomal stalk, playing a central role in the interaction of the ribosome with GTP-bound translation factors. The chain is Large ribosomal subunit protein uL10 from Borrelia garinii subsp. bavariensis (strain ATCC BAA-2496 / DSM 23469 / PBi) (Borreliella bavariensis).